A 119-amino-acid polypeptide reads, in one-letter code: Beta-2-microglobulin (119 aa).

Residues 1–20 (MARLVVVALLVLLCLSGLEA) form the signal peptide. Positions 25 to 114 (PKIQVYSRHP…VTFTAPKTVK (90 aa)) constitute an Ig-like C1-type domain. Residues Cys45 and Cys100 are joined by a disulfide bond.

The protein belongs to the beta-2-microglobulin family. As to quaternary structure, heterodimer of an alpha chain and a beta chain. Beta-2-microglobulin is the beta-chain of major histocompatibility complex class I molecules.

Its subcellular location is the secreted. Its function is as follows. Component of the class I major histocompatibility complex (MHC). Involved in the presentation of peptide antigens to the immune system. This Chiropotes satanas (Brown-bearded saki) protein is Beta-2-microglobulin (B2M).